A 215-amino-acid polypeptide reads, in one-letter code: Cytochrome b6 (215 aa).

The chain crosses the membrane as a helical span at residues 32–52; it reads IFHCLGGITLTCFLVQVATGF. A heme c-binding site is contributed by cysteine 35. Positions 86 and 100 each coordinate heme b. Helical transmembrane passes span 90–110, 116–136, and 186–206; these read ASMM…TGGF, LTWV…VTGY, and LHTF…FPMI. The heme b site is built by histidine 187 and histidine 202.

It belongs to the cytochrome b family. PetB subfamily. In terms of assembly, the 4 large subunits of the cytochrome b6-f complex are cytochrome b6, subunit IV (17 kDa polypeptide, PetD), cytochrome f and the Rieske protein, while the 4 small subunits are PetG, PetL, PetM and PetN. The complex functions as a dimer. Requires heme b as cofactor. Heme c serves as cofactor.

Its subcellular location is the plastid. The protein localises to the chloroplast thylakoid membrane. Functionally, component of the cytochrome b6-f complex, which mediates electron transfer between photosystem II (PSII) and photosystem I (PSI), cyclic electron flow around PSI, and state transitions. This chain is Cytochrome b6, found in Amborella trichopoda.